The following is a 353-amino-acid chain: Protein RecA (353 aa).

Position 74–81 (74–81 (GPESSGKT)) interacts with ATP.

The protein belongs to the RecA family.

It is found in the cytoplasm. Functionally, can catalyze the hydrolysis of ATP in the presence of single-stranded DNA, the ATP-dependent uptake of single-stranded DNA by duplex DNA, and the ATP-dependent hybridization of homologous single-stranded DNAs. It interacts with LexA causing its activation and leading to its autocatalytic cleavage. This is Protein RecA from Bordetella bronchiseptica (strain ATCC BAA-588 / NCTC 13252 / RB50) (Alcaligenes bronchisepticus).